Here is a 140-residue protein sequence, read N- to C-terminus: Transmembrane protein 234 homolog (140 aa).

4 helical membrane-spanning segments follow: residues 14 to 34 (IYAVLSILLVAIMWGATNPFI), 64 to 84 (WQYLLPLVINQLGSIVYVLTL), 88 to 108 (ELSLTVPMANSLTFVFTAITA), and 116 to 136 (SGWKIYCGMTLVILGTVICGL).

This sequence belongs to the TMEM234 family.

It is found in the membrane. In Anopheles gambiae (African malaria mosquito), this protein is Transmembrane protein 234 homolog.